Reading from the N-terminus, the 199-residue chain is Thymidylate kinase (199 aa).

7–14 (GIDGSGKS) lines the ATP pocket.

Belongs to the thymidylate kinase family.

It catalyses the reaction dTMP + ATP = dTDP + ADP. Phosphorylation of dTMP to form dTDP in both de novo and salvage pathways of dTTP synthesis. This chain is Thymidylate kinase, found in Neorickettsia sennetsu (strain ATCC VR-367 / Miyayama) (Ehrlichia sennetsu).